The following is a 305-amino-acid chain: tRNA dimethylallyltransferase (305 aa).

14-21 lines the ATP pocket; that stretch reads GPTTSGKT. 16–21 is a substrate binding site; the sequence is TTSGKT. 3 interaction with substrate tRNA regions span residues 39 to 42, 163 to 167, and 243 to 248; these read DSAL, QRITR, and RCVGYR.

The protein belongs to the IPP transferase family. As to quaternary structure, monomer. It depends on Mg(2+) as a cofactor.

It carries out the reaction adenosine(37) in tRNA + dimethylallyl diphosphate = N(6)-dimethylallyladenosine(37) in tRNA + diphosphate. In terms of biological role, catalyzes the transfer of a dimethylallyl group onto the adenine at position 37 in tRNAs that read codons beginning with uridine, leading to the formation of N6-(dimethylallyl)adenosine (i(6)A). This chain is tRNA dimethylallyltransferase, found in Ruthia magnifica subsp. Calyptogena magnifica.